The following is a 189-amino-acid chain: Holliday junction branch migration complex subunit RuvA (189 aa).

The domain I stretch occupies residues 1-63 (MIYAMYGVLE…DDEISLYGFS (63 aa)). Positions 64–135 (DVLKLKLFEK…ELKDSMKEFD (72 aa)) are domain II. Residues 135–139 (DVTLT) form a flexible linker region. A domain III region spans residues 140–189 (EKDKKILEAIEALVTLGFSRNQSKKAVTQILKKDDSLDDIIKKALKFLSR).

It belongs to the RuvA family. Homotetramer. Forms an RuvA(8)-RuvB(12)-Holliday junction (HJ) complex. HJ DNA is sandwiched between 2 RuvA tetramers; dsDNA enters through RuvA and exits via RuvB. An RuvB hexamer assembles on each DNA strand where it exits the tetramer. Each RuvB hexamer is contacted by two RuvA subunits (via domain III) on 2 adjacent RuvB subunits; this complex drives branch migration. In the full resolvosome a probable DNA-RuvA(4)-RuvB(12)-RuvC(2) complex forms which resolves the HJ.

Its subcellular location is the cytoplasm. Its function is as follows. The RuvA-RuvB-RuvC complex processes Holliday junction (HJ) DNA during genetic recombination and DNA repair, while the RuvA-RuvB complex plays an important role in the rescue of blocked DNA replication forks via replication fork reversal (RFR). RuvA specifically binds to HJ cruciform DNA, conferring on it an open structure. The RuvB hexamer acts as an ATP-dependent pump, pulling dsDNA into and through the RuvAB complex. HJ branch migration allows RuvC to scan DNA until it finds its consensus sequence, where it cleaves and resolves the cruciform DNA. This is Holliday junction branch migration complex subunit RuvA from Thermosipho melanesiensis (strain DSM 12029 / CIP 104789 / BI429).